A 54-amino-acid chain; its full sequence is UPF0391 membrane protein Rmet_0093 (54 aa).

2 helical membrane-spanning segments follow: residues 5–25 (ALVFFIVALIAAIFGFGGIAA) and 30–50 (IAKILFLIFLVVAIVTFVMGL).

The protein belongs to the UPF0391 family.

Its subcellular location is the cell membrane. The chain is UPF0391 membrane protein Rmet_0093 from Cupriavidus metallidurans (strain ATCC 43123 / DSM 2839 / NBRC 102507 / CH34) (Ralstonia metallidurans).